We begin with the raw amino-acid sequence, 787 residues long: Transcriptional corepressor LEUNIG_HOMOLOG (787 aa).

Positions 1–88 (MAQSNWEADK…IEAQQGKAKE (88 aa)) are required for SEU-binding. The region spanning 8–40 (ADKMLDVYIYDYLVKKKLHNTAKSFMTEGKVSP) is the LisH domain. Residues 77–106 (AYIEAQQGKAKEQQMQIQQLQMMRQAQMQR) are a coiled coil. The tract at residues 299–413 (NMTNSPMYGG…TPSTHTPVDG (115 aa)) is disordered. Composition is skewed to low complexity over residues 336–346 (SIGSPMQSSSS) and 355–372 (QQSS…QSQQ). The span at 380–409 (PSSSGPANSTGTGNTVGPSNSQPSTPSTHT) shows a compositional bias: polar residues. WD repeat units lie at residues 508–547 (KSAS…VEST), 550–589 (EHAH…YFLR), 593–633 (GHAA…VRAV), 635–671 (GAST…KRVN), 675–715 (GHSS…HELS), 717–755 (SGNK…CMTV), and 757–787 (GHEC…KIWK).

In terms of assembly, forms corepressor complexes with SLK1 and SLK2; LUH is the transcription repressor subunit and SLK1 and SLK2 the specific DNA-binding adapters. Interacts with SEU. Binds to YAB3, YAB5 and YAB1/FIL; these complexes promote adaxial cell identity in leaves as well as embryonic shoot apical meristem (SAM) initiation and postembryonic SAM maintenance. As to expression, expressed in roots, stems, leaves, seedlings, apex, flowers, siliques, flower organs and seeds (including seed coat).

The protein resides in the nucleus. In terms of biological role, transcription repressor subunit of the SEU-SLK1 and SEU-SLK2 transcriptional corepressor of abiotic stress (e.g. salt and osmotic stress) response genes, by means of an epigenetic process involving histone modification (e.g. H3K9 and H3K14 acetylation), probably by recruiting HDAC, to facilitate the condensation of chromatin thus preventing transcription at the target genes. Can also act as a transcription activator. Implicated in embryo and floral development. Involved in post-synthesis cell wall modifications necessary for mucilage extrusion from seeds upon imbibition, probably by promoting the expression of genes required for mucilage maturation (e.g. MUM2). Regulates the maintenance on leaf polarity and meristem activity as well as the initiation of embryonic shoot apical meristem (SAM) development. This chain is Transcriptional corepressor LEUNIG_HOMOLOG, found in Arabidopsis thaliana (Mouse-ear cress).